The sequence spans 226 residues: V-type proton ATPase subunit E (226 aa).

The protein belongs to the V-ATPase E subunit family. In terms of assembly, V-ATPase is a heteromultimeric enzyme made up of two complexes: the ATP-hydrolytic V1 complex and the proton translocation V0 complex. The V1 complex consists of three catalytic AB heterodimers that form a heterohexamer, three peripheral stalks each consisting of EG heterodimers, one central rotor including subunits D and F, and the regulatory subunits C and H. The proton translocation complex V0 consists of the proton transport subunit a, a ring of proteolipid subunits c9c'', rotary subunit d, subunits e and f, and the accessory subunits VhaAC45 and ATP6AP2.

Functionally, subunit of the V1 complex of vacuolar(H+)-ATPase (V-ATPase), a multisubunit enzyme composed of a peripheral complex (V1) that hydrolyzes ATP and a membrane integral complex (V0) that translocates protons. V-ATPase is responsible for acidifying and maintaining the pH of intracellular compartments and in some cell types, is targeted to the plasma membrane, where it is responsible for acidifying the extracellular environment. In Manduca sexta (Tobacco hawkmoth), this protein is V-type proton ATPase subunit E (VHA26).